The sequence spans 180 residues: Shikimate kinase (180 aa).

14–19 (GAGKSC) contributes to the ATP binding site. Serine 18 serves as a coordination point for Mg(2+). Residues aspartate 36, arginine 60, and glycine 82 each contribute to the substrate site. Arginine 120 contributes to the ATP binding site. Arginine 139 contributes to the substrate binding site.

The protein belongs to the shikimate kinase family. Monomer. It depends on Mg(2+) as a cofactor.

It localises to the cytoplasm. The catalysed reaction is shikimate + ATP = 3-phosphoshikimate + ADP + H(+). It functions in the pathway metabolic intermediate biosynthesis; chorismate biosynthesis; chorismate from D-erythrose 4-phosphate and phosphoenolpyruvate: step 5/7. Catalyzes the specific phosphorylation of the 3-hydroxyl group of shikimic acid using ATP as a cosubstrate. The polypeptide is Shikimate kinase (Xanthomonas campestris pv. campestris (strain 8004)).